A 209-amino-acid chain; its full sequence is PRA1 family protein A1 (209 aa).

The next 4 helical transmembrane spans lie at 51 to 73, 77 to 99, 144 to 164, and 166 to 186; these read LYYY…VLTR, IFAA…GSFS, VFVL…SGLL, and VSVA…LRTP.

The protein belongs to the PRA1 family.

It is found in the endoplasmic reticulum membrane. Its function is as follows. May be involved in both secretory and endocytic intracellular trafficking in the endosomal/prevacuolar compartments. This chain is PRA1 family protein A1 (PRA1A1), found in Arabidopsis thaliana (Mouse-ear cress).